The primary structure comprises 343 residues: Flavonoid 4'-O-methyltransferase 4 (343 aa).

Asp-211 provides a ligand contact to S-adenosyl-L-methionine. The active-site Proton acceptor is His-249.

It belongs to the class I-like SAM-binding methyltransferase superfamily. Cation-independent O-methyltransferase family. As to quaternary structure, homodimer.

It carries out the reaction apigenin + S-adenosyl-L-methionine = acacetin + S-adenosyl-L-homocysteine + H(+). The catalysed reaction is kaempferol + S-adenosyl-L-methionine = kaempferide + S-adenosyl-L-homocysteine + H(+). It catalyses the reaction isorhamnetin + S-adenosyl-L-methionine = 3',4'-O-dimethylquercetin + S-adenosyl-L-homocysteine + 2 H(+). The enzyme catalyses scutellarein + S-adenosyl-L-methionine = scutellarein 4'-methyl ether + S-adenosyl-L-homocysteine + H(+). It carries out the reaction (2S)-naringenin + S-adenosyl-L-methionine = (2S)-naringenin 4'-methyl ether + S-adenosyl-L-homocysteine + H(+). The catalysed reaction is 4',7,8-trihydroxyflavone + S-adenosyl-L-methionine = 7,8-dihydroxy-4'-methoxyflavone + S-adenosyl-L-homocysteine + H(+). It catalyses the reaction taxifolin + S-adenosyl-L-methionine = taxifolin 4'-methyl ether + S-adenosyl-L-homocysteine + H(+). Its pathway is flavonoid metabolism. In terms of biological role, flavonoid 4'-O-methyltransferase involved in the biosynthesis of polymethoxylated flavonoids natural products such as pebrellin, aroma compounds which contribute to the flavor of peppermint, and exhibit pharmacological activities such as anti-allergic, anti-oxidant, antibacterial, anti-proliferative, and anti-inflammatory effects. Catalyzes S-adenosylmethionine-dependent regioselective 4'-O-methylation of flavonoids; active on various hydroxylated flavonoid substrates, including isorhamnetin, kaempferol, apigenin (API), scutellarein (6-hydroxy-apigenin, 6-OH-API, SCU), taxifolin, 7,8,4'-trihydroxy-flavone and naringenin (NAR), and, with a lower efficiency, quercetin, rhamnetin, luteolin (LUT) and 7,8,3',4'-tetrahydroxy-flavone. The chain is Flavonoid 4'-O-methyltransferase 4 from Mentha piperita (Peppermint).